The sequence spans 201 residues: Ubiquinone biosynthesis accessory factor UbiJ (201 aa).

Positions 15-112 constitute an SCP2 domain; it reads LNTFLYRSPA…QVVQNFVALA (98 aa).

The protein belongs to the UbiJ family.

Its subcellular location is the cytoplasm. The protein operates within cofactor biosynthesis; ubiquinone biosynthesis. Required for ubiquinone (coenzyme Q) biosynthesis under aerobic conditions. Binds hydrophobic ubiquinone biosynthetic intermediates via its SCP2 domain and is essential for the stability of the Ubi complex. May constitute a docking platform where Ubi enzymes assemble and access their SCP2-bound polyprenyl substrates. Required for intracellular proliferation in macrophages. The protein is Ubiquinone biosynthesis accessory factor UbiJ of Salmonella typhimurium (strain LT2 / SGSC1412 / ATCC 700720).